Here is a 112-residue protein sequence, read N- to C-terminus: Ribonuclease P protein component (112 aa).

Belongs to the RnpA family. As to quaternary structure, consists of a catalytic RNA component (M1 or rnpB) and a protein subunit.

It catalyses the reaction Endonucleolytic cleavage of RNA, removing 5'-extranucleotides from tRNA precursor.. RNaseP catalyzes the removal of the 5'-leader sequence from pre-tRNA to produce the mature 5'-terminus. It can also cleave other RNA substrates such as 4.5S RNA. The protein component plays an auxiliary but essential role in vivo by binding to the 5'-leader sequence and broadening the substrate specificity of the ribozyme. The protein is Ribonuclease P protein component of Clostridium kluyveri (strain ATCC 8527 / DSM 555 / NBRC 12016 / NCIMB 10680 / K1).